Here is a 122-residue protein sequence, read N- to C-terminus: S-adenosylmethionine decarboxylase proenzyme (122 aa).

Ser-63 functions as the Schiff-base intermediate with substrate; via pyruvic acid in the catalytic mechanism. Residue Ser-63 is modified to Pyruvic acid (Ser); by autocatalysis. The active-site Proton acceptor; for processing activity is His-68. Catalysis depends on Cys-83, which acts as the Proton donor; for catalytic activity.

Belongs to the prokaryotic AdoMetDC family. Type 1 subfamily. Heterotetramer of two alpha and two beta chains arranged as a dimer of alpha/beta heterodimers. Pyruvate is required as a cofactor. Post-translationally, is synthesized initially as an inactive proenzyme. Formation of the active enzyme involves a self-maturation process in which the active site pyruvoyl group is generated from an internal serine residue via an autocatalytic post-translational modification. Two non-identical subunits are generated from the proenzyme in this reaction, and the pyruvate is formed at the N-terminus of the alpha chain, which is derived from the carboxyl end of the proenzyme. The post-translation cleavage follows an unusual pathway, termed non-hydrolytic serinolysis, in which the side chain hydroxyl group of the serine supplies its oxygen atom to form the C-terminus of the beta chain, while the remainder of the serine residue undergoes an oxidative deamination to produce ammonia and the pyruvoyl group blocking the N-terminus of the alpha chain.

It catalyses the reaction S-adenosyl-L-methionine + H(+) = S-adenosyl 3-(methylsulfanyl)propylamine + CO2. Its pathway is amine and polyamine biosynthesis; S-adenosylmethioninamine biosynthesis; S-adenosylmethioninamine from S-adenosyl-L-methionine: step 1/1. Catalyzes the decarboxylation of S-adenosylmethionine to S-adenosylmethioninamine (dcAdoMet), the propylamine donor required for the synthesis of the polyamines spermine and spermidine from the diamine putrescine. In Methanococcus maripaludis (strain DSM 14266 / JCM 13030 / NBRC 101832 / S2 / LL), this protein is S-adenosylmethionine decarboxylase proenzyme.